A 133-amino-acid polypeptide reads, in one-letter code: Small ribosomal subunit protein uS11 (133 aa).

Belongs to the universal ribosomal protein uS11 family. In terms of assembly, part of the 30S ribosomal subunit. Interacts with proteins S7 and S18. Binds to IF-3.

In terms of biological role, located on the platform of the 30S subunit, it bridges several disparate RNA helices of the 16S rRNA. Forms part of the Shine-Dalgarno cleft in the 70S ribosome. The protein is Small ribosomal subunit protein uS11 of Ralstonia nicotianae (strain ATCC BAA-1114 / GMI1000) (Ralstonia solanacearum).